We begin with the raw amino-acid sequence, 153 residues long: Large ribosomal subunit protein uL15 (153 aa).

The disordered stretch occupies residues 1-48 (MRLNELSPAPGSKKDRKRVGRGDAGRGNYSGRGMKGQKARSGGATRPG).

This sequence belongs to the universal ribosomal protein uL15 family. In terms of assembly, part of the 50S ribosomal subunit.

Binds to the 23S rRNA. The sequence is that of Large ribosomal subunit protein uL15 from Dehalococcoides mccartyi (strain ATCC BAA-2266 / KCTC 15142 / 195) (Dehalococcoides ethenogenes (strain 195)).